A 92-amino-acid polypeptide reads, in one-letter code: Large ribosomal subunit protein eL43 (92 aa).

A C4-type zinc finger spans residues 39–60 (CSFCGKKTVRRGAAGIWSCHSC).

This sequence belongs to the eukaryotic ribosomal protein eL43 family.

The polypeptide is Large ribosomal subunit protein eL43 (RPL43) (Candida glabrata (strain ATCC 2001 / BCRC 20586 / JCM 3761 / NBRC 0622 / NRRL Y-65 / CBS 138) (Yeast)).